Consider the following 55-residue polypeptide: Large ribosomal subunit protein bL33 (55 aa).

A compositionally biased stretch (basic and acidic residues) spans 1-10 (MAKGGREKIK). Positions 1–27 (MAKGGREKIKLQSTAGTGHFYTTDKNK) are disordered.

This sequence belongs to the bacterial ribosomal protein bL33 family.

This Polaromonas naphthalenivorans (strain CJ2) protein is Large ribosomal subunit protein bL33.